The sequence spans 113 residues: Dynein light chain Tctex-type 1 (113 aa).

Methionine 1 is subject to N-acetylmethionine. The interval 41–113 is interaction with GNB1; the sequence is QWTTNVLEQT…CIVSTFGLSI (73 aa).

It belongs to the dynein light chain Tctex-type family. As to quaternary structure, homodimer. The cytoplasmic dynein 1 complex consists of two catalytic heavy chains (HCs) and a number of non-catalytic subunits presented by intermediate chains (ICs), light intermediate chains (LICs) and light chains (LCs); the composition seems to vary in respect to the IC, LIC and LC composition. The heavy chain homodimer serves as a scaffold for the probable homodimeric assembly of the respective non-catalytic subunits. The ICs and LICs bind directly to the HC dimer and the LCs assemble on the IC dimer. DYNLT1 and DYNLT3 compete for association with dynein IC (DYNC1I1 or DYNC1I2). Self-associates. Interacts with RHO. Interacts with DYNC1I1 and DYNC1I2. Interacts with DOC2A, DOC2B and SCN10A. Interacts with PVR. Interacts with SVIL isoform 2. Interacts with GNB1; the interaction occurs in presence of guanine nucleotide-binding protein G(T) subunit gamma; the interaction diminishes the association of DYNLT1 with dynein IC (DYNC1I1 or DYNC1I2). Interacts with GNB2, GNB3 and GNB5; the interactions occur in presence of guanine nucleotide-binding protein G(T) subunit gamma. Interacts with ACVR2B and ARHGEF2. Interacts with DNAI4. Interacts with CFAP61. Post-translationally, phosphorylated by BMPR2. The phosphorylation status is proposed to regulate the association with the cytoplasmic dynein complex and may have role in cytoplasmic dynein cargo release. As to expression, high level in testis (germ cell-specific). Expressed in sperm (at protein level). 200-fold lower in liver, brain, heart, spleen, and kidney. Levels in thymus and two embryonal carcinoma cell lines were several-fold higher than this low constitutive level.

It is found in the golgi apparatus. The protein resides in the cytoplasm. The protein localises to the cytoskeleton. Its subcellular location is the spindle. Its function is as follows. Acts as one of several non-catalytic accessory components of the cytoplasmic dynein 1 complex that are thought to be involved in linking dynein to cargos and to adapter proteins that regulate dynein function. Cytoplasmic dynein 1 acts as a motor for the intracellular retrograde motility of vesicles and organelles along microtubules. Binds to transport cargos and is involved in apical cargo transport such as rhodopsin-bearing vesicles in polarized epithelia. May also be a accessory component of axonemal dynein. Plays an important role in male germ cell development and function. Candidate for involvement in male sterility. Plays a role in neuronal morphogenesis; the function is independent of cytoplasmic dynein and seems to be coupled to regulation of the actin cytoskeleton by enhancing Rac1 activity. The function in neurogenesis may be regulated by association with a G-protein beta-gamma dimer. May function as a receptor-independent activator of heterotrimeric G-protein signaling; the activation appears to be independent of a nucleotide exchange. Plays a role in regulating neurogenesis; inhibits the genesis of neurons from precursor cells during cortical development presumably by antagonizing ARHGEF2. Unrelated to the role in retrograde microtubule-associated movement may play a role in the dimerization of cytoplasmic proteins/domains such as for ACVR2B. Binds to the cytoplasmic domain of ACVR2B and, in vitro, inhibits ACVR2B signaling. Involved in the regulation of mitotic spindle orientation. The polypeptide is Dynein light chain Tctex-type 1 (Dynlt1) (Mus musculus (Mouse)).